Consider the following 272-residue polypeptide: L-aminoadipate-semialdehyde dehydrogenase-phosphopantetheinyl transferase (272 aa).

It belongs to the P-Pant transferase superfamily. AcpS family.

The enzyme catalyses apo-[ACP] + CoA = holo-[ACP] + adenosine 3',5'-bisphosphate + H(+). Its function is as follows. Catalyzes the transfer of a 4'-phosphopantetheine moiety from coenzyme A to a serine residue of acceptor proteins, such as alpha-aminoadipate reductase. Necessary for alpha-aminoadipate reductase activity. In Saccharomyces cerevisiae (strain ATCC 204508 / S288c) (Baker's yeast), this protein is L-aminoadipate-semialdehyde dehydrogenase-phosphopantetheinyl transferase.